We begin with the raw amino-acid sequence, 317 residues long: tRNA(Ile)-lysidine synthase (317 aa).

Position 30-35 (30-35) interacts with ATP; the sequence is SGGSDS.

This sequence belongs to the tRNA(Ile)-lysidine synthase family.

It is found in the cytoplasm. The enzyme catalyses cytidine(34) in tRNA(Ile2) + L-lysine + ATP = lysidine(34) in tRNA(Ile2) + AMP + diphosphate + H(+). In terms of biological role, ligates lysine onto the cytidine present at position 34 of the AUA codon-specific tRNA(Ile) that contains the anticodon CAU, in an ATP-dependent manner. Cytidine is converted to lysidine, thus changing the amino acid specificity of the tRNA from methionine to isoleucine. This chain is tRNA(Ile)-lysidine synthase, found in Chlamydia felis (strain Fe/C-56) (Chlamydophila felis).